A 349-amino-acid chain; its full sequence is Galanin receptor type 1 (349 aa).

Residues 1–36 (MELAVGNLSEGNASWPEPPAPEPGPLFGIGVENFVT) are Extracellular-facing. Residues Asn-7 and Asn-12 are each glycosylated (N-linked (GlcNAc...) asparagine). The helical transmembrane segment at 37–57 (LVVFGLIFALGVLGNSLVITV) threads the bilayer. The Cytoplasmic portion of the chain corresponds to 58–70 (LARSKPGKPRSTT). A helical membrane pass occupies residues 71–91 (NLFILNLSIADLAYLLFCIPF). At 92-109 (QATVYALPTWVLGAFICK) the chain is on the extracellular side. Cys-108 and Cys-187 are joined by a disulfide. A helical transmembrane segment spans residues 110–131 (FIHYFFTVSMLVSIFTLAAMSV). Residues 132-151 (DRYVAIVHSRRSSSLRVSRN) lie on the Cytoplasmic side of the membrane. The chain crosses the membrane as a helical span at residues 152–172 (ALLGVGCIWALSIAMASPVAY). Residues 173–200 (HQGLFHPRASNQTFCWEQWPDPRHKKAY) lie on the Extracellular side of the membrane. Asn-183 is a glycosylation site (N-linked (GlcNAc...) asparagine). Residues 201-221 (VVCTFVFGYLLPLLLICFCYA) traverse the membrane as a helical segment. Residues 222 to 248 (KVLNHLHKKLKNMSKKSEASKKKTAQT) are Cytoplasmic-facing. The chain crosses the membrane as a helical span at residues 249 to 269 (VLVVVVVFGISWLPHHIIHLW). The Extracellular segment spans residues 270-271 (AE). Residues 272-292 (FGVFPLTPASFLFRITAHCLA) form a helical membrane-spanning segment. Over 293–349 (YSNSSVNPIIYAFLSENFRKAYKQVFKCHIRKDSHLSDTKESKSRIDTPPSTNCTHV) the chain is Cytoplasmic. Residue Cys-320 is the site of S-palmitoyl cysteine attachment.

This sequence belongs to the G-protein coupled receptor 1 family. Interacts with GRP39 AND HTR1A. Post-translationally, palmitoylated on at least one of the three cysteine residues present in the C-terminal part.

Its subcellular location is the cell membrane. Its function is as follows. Receptor for the hormone galanin. The activity of this receptor is mediated by G proteins that inhibit adenylate cyclase activity. This is Galanin receptor type 1 (GALR1) from Homo sapiens (Human).